A 293-amino-acid polypeptide reads, in one-letter code: Probable endoribonuclease YicC (293 aa).

It belongs to the YicC/YloC family. A divalent metal cation serves as cofactor.

Its function is as follows. Negatively modulates sporulation, probably in response to nutrient conditions. Effects expression of sporulation regulator spo0A in an indirect manner, possibly via repression of the sinRR' operon. In terms of biological role, probably a ssRNA endonuclease. Functionally, might contribute to small RNA (sRNA) regulation. The protein is Probable endoribonuclease YicC of Clostridioides difficile (strain 630) (Peptoclostridium difficile).